A 1129-amino-acid polypeptide reads, in one-letter code: DNA-directed RNA polymerase I subunit RPA2 (1129 aa).

The C4-type zinc finger occupies cysteine 1061–cysteine 1093.

It belongs to the RNA polymerase beta chain family. Component of the RNA polymerase I (Pol I) complex consisting of at least 13 subunits.

The protein resides in the nucleus. Its subcellular location is the nucleolus. The catalysed reaction is RNA(n) + a ribonucleoside 5'-triphosphate = RNA(n+1) + diphosphate. Functionally, DNA-dependent RNA polymerase catalyzes the transcription of DNA into RNA using the four ribonucleoside triphosphates as substrates. Second largest core component of RNA polymerase I which synthesizes ribosomal RNA precursors. Proposed to contribute to the polymerase catalytic activity and forms the polymerase active center together with the largest subunit. Pol I is composed of mobile elements and RPA2 is part of the core element with the central large cleft and probably a clamp element that moves to open and close the cleft. The polypeptide is DNA-directed RNA polymerase I subunit RPA2 (Drosophila melanogaster (Fruit fly)).